The chain runs to 1862 residues: Ankyrin-1 (1862 aa).

Residues 1 to 827 (MGFCKADAAT…DELVGSKAER (827 aa)) form an 89 kDa domain region. 23 ANK repeats span residues 40–69 (NGLN…ILET), 73–102 (KGNT…NVNA), 106–135 (KGFT…NQNV), 139–168 (DGFT…KGKV), 170–197 (LPAL…NPDV), 201–230 (TGFT…SVNF), 234–263 (NGIT…QIET), 267–296 (DELT…PIQA), 300–329 (NGLS…EIDD), 333–362 (DHLT…KPNS), 366–395 (NGFT…SIDA), 399–428 (SGLT…SPNV), 432–461 (KVET…KANA), 465–494 (DDQT…SPNL), 498–527 (AGHT…SQAC), 531–560 (KGFT…HPNA), 564–593 (NGLT…SPHS), 597–626 (NGYT…SANA), 630–659 (QGVT…NGNL), 663–692 (SGLT…TVDA), 696–725 (MGYT…DVNA), 729–758 (LGYS…SPNE), and 762–791 (NGTT…ETSV). At Lys-55 the chain carries Phosphoserine. Asn-101 is modified ((3S)-3-hydroxyasparagine; by HIF1AN; partial). The residue at position 229 (Asn-229) is a (3S)-3-hydroxyasparagine; by HIF1AN. At Ser-425 the chain carries Phosphoserine. Residues Asn-427 and Asn-460 each carry the (3S)-3-hydroxyasparagine; by HIF1AN modification. (3S)-3-hydroxyasparagine; by HIF1AN occurs at positions 625 and 658. Asp-691 is subject to (3S)-3-hydroxyaspartate; by HIF1AN. Asn-724 bears the (3S)-3-hydroxyasparagine; by HIF1AN mark. Ser-755 bears the Phosphoserine mark. Residue Asn-757 is modified to (3S)-3-hydroxyasparagine; by HIF1AN. Phosphoserine occurs at positions 777, 813, 830, and 852. Residues 812–834 (VSEDEGDELVGSKAERRDSRDVG) are disordered. A compositionally biased stretch (basic and acidic residues) spans 824-834 (KAERRDSRDVG). Thr-862 is modified (phosphothreonine). The segment at 872 to 900 (DQEQASKEYDEDSLIPSSPATETSDNISP) is disordered. Positions 886–900 (IPSSPATETSDNISP) are enriched in polar residues. 2 ZU5 domains span residues 909 to 1064 (FLVS…IMSR) and 1066 to 1212 (CQDY…LSDC). Thr-957 is subject to Phosphothreonine. A Phosphotyrosine modification is found at Tyr-1069. At Ser-1078 the chain carries Phosphoserine. The tract at residues 1197 to 1331 (ANFTTNVSAR…PVKVRDSSRE (135 aa)) is UPA domain. Residues Thr-1374 and Thr-1376 each carry the phosphothreonine modification. 2 positions are modified to phosphoserine: Ser-1386 and Ser-1388. Positions 1387–1862 (ESRLGFTSDT…KRASLKRGKQ (476 aa)) are 55 kDa regulatory domain. Residue Thr-1396 is modified to Phosphothreonine. One can recognise a Death domain in the interval 1399–1483 (VEMRMAVIRE…EIVNMLEGSG (85 aa)). 3 positions are modified to phosphoserine: Ser-1424, Ser-1473, and Ser-1482. Positions 1481–1506 (GSGRQSRNLKPERRHGDREYSLSPSQ) are disordered. Residues 1489–1500 (LKPERRHGDREY) are compositionally biased toward basic and acidic residues. A phosphoserine mark is found at Ser-1519, Ser-1529, and Ser-1612. Disordered stretches follow at residues 1598–1720 (EGAH…GPHS) and 1744–1767 (VSTR…KEPS). The span at 1637–1647 (EGQRSEKKRQE) shows a compositional bias: basic and acidic residues. The segment covering 1648 to 1666 (VSGTEQDTETEVSLVSGQQ) has biased composition (polar residues). A phosphoserine mark is found at Ser-1660, Ser-1675, and Ser-1685. Residues 1681–1694 (VLDRSQARTLDWDK) show a composition bias toward basic and acidic residues. Positions 1695–1720 (QGSTAVHPQEATQSSWQEEVTQGPHS) are enriched in polar residues.

As to quaternary structure, component of the ankyrin-1 complex in the erythrocyte, composed of ANK1, RHCE, RHAG, SLC4A1, EPB42, GYPA, GYPB and AQP1. Interacts with a number of integral membrane proteins and cytoskeletal proteins. Interacts (via N-terminus) with SPTB/spectrin (beta chain). Also interacts with TTN/titin. Isoform Mu17 interacts with OBSCN isoform 3/obscurin. Interacts with HIF1AN. Interacts (via ANK 1-5 repeats) with RHCE; this interaction mediates the primary membrane attachment site for ANK1. Interacts (via ANK 1-2 repeats) with AQP1 (via the N-terminal). Interacts (via ANK 1-13 repeats) with EPB42. Interacts directly with SLC4A1 (via the cytoplasmic domain); this interaction is mediated by the SLC4A1 Band 3-II and Band 3-III dimers. Post-translationally, regulated by phosphorylation. In terms of processing, acylated by palmitic acid group(s). Hydroxylated by HIF1AN at several asparagine and 1 aspartate residue within ANK repeat region; hydroxylation seems to increase the conformational stability of this region and may also modulate protein-protein interactions mediated by the ANK repeat region.

The protein localises to the cytoplasm. It is found in the cytoskeleton. Its subcellular location is the membrane. The protein resides in the sarcoplasmic reticulum. Its function is as follows. Component of the ankyrin-1 complex, a multiprotein complex involved in the stability and shape of the erythrocyte membrane. Attaches integral membrane proteins to cytoskeletal elements; binds to the erythrocyte membrane protein band 4.2, to Na-K ATPase, to the lymphocyte membrane protein GP85, and to the cytoskeletal proteins fodrin, tubulin, vimentin and desmin. Erythrocyte ankyrins also link spectrin (beta chain) to the cytoplasmic domain of the erythrocytes anion exchange protein; they retain most or all of these binding functions. The chain is Ankyrin-1 from Mus musculus (Mouse).